A 156-amino-acid polypeptide reads, in one-letter code: FAD synthase (156 aa).

ATP-binding positions include 16-17, 21-24, aspartate 101, and tyrosine 129; these read TF and HPGH.

It belongs to the archaeal FAD synthase family. As to quaternary structure, homodimer. It depends on a divalent metal cation as a cofactor.

It catalyses the reaction FMN + ATP + H(+) = FAD + diphosphate. Its pathway is cofactor biosynthesis; FAD biosynthesis; FAD from FMN: step 1/1. Functionally, catalyzes the transfer of the AMP portion of ATP to flavin mononucleotide (FMN) to produce flavin adenine dinucleotide (FAD) coenzyme. This Methanococcus aeolicus (strain ATCC BAA-1280 / DSM 17508 / OCM 812 / Nankai-3) protein is FAD synthase.